Here is a 404-residue protein sequence, read N- to C-terminus: Putative glutamate--cysteine ligase 2 (404 aa).

Residues 377 to 404 (GPAGKRAHEGGRSFRPAAGAPMSIRGQE) are disordered.

The protein belongs to the glutamate--cysteine ligase type 2 family. YbdK subfamily.

The catalysed reaction is L-cysteine + L-glutamate + ATP = gamma-L-glutamyl-L-cysteine + ADP + phosphate + H(+). ATP-dependent carboxylate-amine ligase which exhibits weak glutamate--cysteine ligase activity. In Pseudomonas aeruginosa (strain UCBPP-PA14), this protein is Putative glutamate--cysteine ligase 2.